We begin with the raw amino-acid sequence, 562 residues long: TBC1 domain family member 24 (562 aa).

Residues lysine 36, arginine 40, lysine 238, arginine 242, and 293 to 297 (RLFSR) each bind a 1,2-diacyl-sn-glycero-3-phospho-(1D-myo-inositol). In terms of domain architecture, Rab-GAP TBC spans 42 to 259 (GHWAKSHTLR…FFHKVRGGQP (218 aa)). Positions 337-549 (EIVSVKEMRD…ISIIEVWGFK (213 aa)) constitute a TLDc domain. Positions 450–471 (NSSSADKEANSSQSDKDGIDPS) are disordered. Basic and acidic residues predominate over residues 454–468 (ADKEANSSQSDKDGI).

As to quaternary structure, interacts with ARF6.

The protein localises to the cell membrane. It is found in the cytoplasm. The protein resides in the cytoplasmic vesicle membrane. It localises to the presynapse. May act as a GTPase-activating protein for Rab family protein(s). Involved in neuronal projections development, probably through a negative modulation of ARF6 function. Involved in the regulation of synaptic vesicle trafficking. The protein is TBC1 domain family member 24 (tbc1d24) of Xenopus laevis (African clawed frog).